Reading from the N-terminus, the 215-residue chain is N-(5'-phosphoribosyl)anthranilate isomerase (215 aa).

The protein belongs to the TrpF family.

It catalyses the reaction N-(5-phospho-beta-D-ribosyl)anthranilate = 1-(2-carboxyphenylamino)-1-deoxy-D-ribulose 5-phosphate. It functions in the pathway amino-acid biosynthesis; L-tryptophan biosynthesis; L-tryptophan from chorismate: step 3/5. The protein is N-(5'-phosphoribosyl)anthranilate isomerase of Rhizobium meliloti (strain 1021) (Ensifer meliloti).